Consider the following 401-residue polypeptide: Glyceraldehyde-3-phosphate dehydrogenase A, chloroplastic (401 aa).

Residues 1 to 65 constitute a chloroplast transit peptide; it reads MASNMLSIAN…RSSQNGVVEA (65 aa). Residues 76-77, Asp100, and Arg145 each bind NADP(+); that span reads RI. D-glyceraldehyde 3-phosphate contacts are provided by residues 217–219, Thr248, Arg263, 276–277, and Arg299; these read SCT and TG. Cys218 functions as the Nucleophile in the catalytic mechanism. Residue Asn381 participates in NADP(+) binding.

This sequence belongs to the glyceraldehyde-3-phosphate dehydrogenase family. Tetramer of either four A chains (GAPDH 2) or two A and two B chains (GAPDH 1).

The protein resides in the plastid. Its subcellular location is the chloroplast. The enzyme catalyses D-glyceraldehyde 3-phosphate + phosphate + NADP(+) = (2R)-3-phospho-glyceroyl phosphate + NADPH + H(+). The protein operates within carbohydrate biosynthesis; Calvin cycle. This Spinacia oleracea (Spinach) protein is Glyceraldehyde-3-phosphate dehydrogenase A, chloroplastic (GAPA).